Reading from the N-terminus, the 430-residue chain is GTPase Obg (430 aa).

Residues 1-158 (MFIDKAKIYL…LTVVLELKLI (158 aa)) enclose the Obg domain. In terms of domain architecture, OBG-type G spans 159 to 330 (ADVGLVGFPN…LLSYVSKRLK (172 aa)). Residues 165 to 172 (GFPNVGKS), 190 to 194 (FTTLT), 212 to 215 (DIPG), 282 to 285 (NKTD), and 311 to 313 (SAA) each bind GTP. Mg(2+) contacts are provided by Ser172 and Thr192. The OCT domain occupies 351–430 (KYEETEDKYH…MYSVEFEYFN (80 aa)).

This sequence belongs to the TRAFAC class OBG-HflX-like GTPase superfamily. OBG GTPase family. In terms of assembly, monomer. Mg(2+) is required as a cofactor.

It localises to the cytoplasm. An essential GTPase which binds GTP, GDP and possibly (p)ppGpp with moderate affinity, with high nucleotide exchange rates and a fairly low GTP hydrolysis rate. Plays a role in control of the cell cycle, stress response, ribosome biogenesis and in those bacteria that undergo differentiation, in morphogenesis control. The protein is GTPase Obg of Alkaliphilus oremlandii (strain OhILAs) (Clostridium oremlandii (strain OhILAs)).